The sequence spans 224 residues: Germin-like protein 8-11 (224 aa).

The signal sequence occupies residues 1–22 (MASSSFLLLATLLAMASWQGMA). A disulfide bond links cysteine 32 and cysteine 47. One can recognise a Cupin type-1 domain in the interval 62 to 212 (AMLDTPRKTN…AFQVEKGTID (151 aa)). N-linked (GlcNAc...) asparagine glycosylation is present at asparagine 76. Mn(2+)-binding residues include histidine 109, histidine 111, glutamate 116, and histidine 157.

It belongs to the germin family. In terms of assembly, oligomer (believed to be a pentamer but probably hexamer).

It localises to the secreted. Its subcellular location is the extracellular space. The protein localises to the apoplast. Its function is as follows. Plays a role in broad-spectrum disease resistance. Probably has no oxalate oxidase activity even if the active site is conserved. This chain is Germin-like protein 8-11, found in Oryza sativa subsp. japonica (Rice).